Here is a 151-residue protein sequence, read N- to C-terminus: Mini-ribonuclease 3 (151 aa).

D28 is an active-site residue.

The protein belongs to the MrnC RNase family. Homodimer. Mg(2+) serves as cofactor.

The protein localises to the cytoplasm. Functionally, involved in correct processing of both the 5' and 3' ends of 23S rRNA precursor. Processes 30S rRNA precursor transcript even in absence of ribonuclease 3 (Rnc); Rnc processes 30S rRNA into smaller rRNA precursors. The protein is Mini-ribonuclease 3 of Clostridium tetani (strain Massachusetts / E88).